The chain runs to 271 residues: Tryptophan synthase alpha chain (271 aa).

Active-site proton acceptor residues include Glu53 and Asp64.

Belongs to the TrpA family. As to quaternary structure, tetramer of two alpha and two beta chains.

The catalysed reaction is (1S,2R)-1-C-(indol-3-yl)glycerol 3-phosphate + L-serine = D-glyceraldehyde 3-phosphate + L-tryptophan + H2O. It functions in the pathway amino-acid biosynthesis; L-tryptophan biosynthesis; L-tryptophan from chorismate: step 5/5. Its function is as follows. The alpha subunit is responsible for the aldol cleavage of indoleglycerol phosphate to indole and glyceraldehyde 3-phosphate. In Streptomyces coelicolor (strain ATCC BAA-471 / A3(2) / M145), this protein is Tryptophan synthase alpha chain.